The primary structure comprises 213 residues: Bcl-2-related ovarian killer protein (213 aa).

Residues 32 to 44 carry the BH4 motif; that stretch reads KALCRDYINSRLI. The BH3 signature appears at 67 to 83; it reads VSAILLRLGDELEYIRP. The short motif at 113–132 is the BH1 element; it reads QIFTAGITWGKVVSLYAVAA. The BH2 signature appears at 165 to 179; that stretch reads WLKRRGGWADITKCV. The chain crosses the membrane as a helical span at residues 190-210; sequence WLVAAVCSFGHFLKAIFFVLL.

It belongs to the Bcl-2 family.

Its subcellular location is the membrane. May play a role in apoptosis. This chain is Bcl-2-related ovarian killer protein, found in Gallus gallus (Chicken).